A 256-amino-acid chain; its full sequence is tRNA (guanine-N(7)-)-methyltransferase (256 aa).

The tract at residues 1 to 43 (MDVDPVNSEMELDNKPTCETVPGLPQKKHYRQRAHSNPHSDHD) is disordered. Residues 26–36 (QKKHYRQRAHS) show a composition bias toward basic residues. S-adenosyl-L-methionine-binding positions include G74, 97 to 98 (EI), 132 to 133 (NA), and L152. Residue D155 is part of the active site. 230-232 (TEE) provides a ligand contact to S-adenosyl-L-methionine.

The protein belongs to the class I-like SAM-binding methyltransferase superfamily. TrmB family.

It is found in the nucleus. The catalysed reaction is guanosine(46) in tRNA + S-adenosyl-L-methionine = N(7)-methylguanosine(46) in tRNA + S-adenosyl-L-homocysteine. It functions in the pathway tRNA modification; N(7)-methylguanine-tRNA biosynthesis. Catalyzes the formation of N(7)-methylguanine at position 46 (m7G46) in tRNA. This is tRNA (guanine-N(7)-)-methyltransferase from Caenorhabditis briggsae.